Consider the following 144-residue polypeptide: 3-hydroxyacyl-[acyl-carrier-protein] dehydratase FabZ (144 aa).

His51 is a catalytic residue.

It belongs to the thioester dehydratase family. FabZ subfamily.

The protein resides in the cytoplasm. The enzyme catalyses a (3R)-hydroxyacyl-[ACP] = a (2E)-enoyl-[ACP] + H2O. Involved in unsaturated fatty acids biosynthesis. Catalyzes the dehydration of short chain beta-hydroxyacyl-ACPs and long chain saturated and unsaturated beta-hydroxyacyl-ACPs. The chain is 3-hydroxyacyl-[acyl-carrier-protein] dehydratase FabZ from Lactococcus lactis subsp. cremoris (strain MG1363).